The sequence spans 404 residues: Spore germination protein YndF (404 aa).

The N-terminal stretch at Met1 to Gly24 is a signal peptide. A lipid anchor (N-palmitoyl cysteine) is attached at Cys25. Cys25 is lipidated: S-diacylglycerol cysteine.

Belongs to the GerABKC lipoprotein family.

The protein localises to the cell membrane. Its function is as follows. May be involved in spore germination. The chain is Spore germination protein YndF (yndF) from Bacillus subtilis (strain 168).